Reading from the N-terminus, the 492-residue chain is Protein KOKOPELLI (492 aa).

Disordered stretches follow at residues 218–354 (VTSP…RNVM) and 394–426 (SKFHHKHQEKSKERKRPMSESKGLTTHKQQHQG). The segment covering 256–270 (QETETFDDDSSETEA) has biased composition (acidic residues). Positions 287–305 (STSQEYSGETGSSSGSEWE) are enriched in low complexity. Polar residues predominate over residues 317–336 (ESSYPPQNDDSVSEVSTSPP). Composition is skewed to basic and acidic residues over residues 337-348 (HTDRDTSREPGK) and 403-412 (KSKERKRPMS).

In terms of tissue distribution, mostly expressed in pollen and open flowers and, to a lower extent, in closed flowers.

Positively regulates reproductive function by facilitating male gametophyte formation and double fertilization. In Arabidopsis thaliana (Mouse-ear cress), this protein is Protein KOKOPELLI.